Here is a 195-residue protein sequence, read N- to C-terminus: Imidazoleglycerol-phosphate dehydratase (195 aa).

This sequence belongs to the imidazoleglycerol-phosphate dehydratase family.

The protein resides in the cytoplasm. The catalysed reaction is D-erythro-1-(imidazol-4-yl)glycerol 3-phosphate = 3-(imidazol-4-yl)-2-oxopropyl phosphate + H2O. It participates in amino-acid biosynthesis; L-histidine biosynthesis; L-histidine from 5-phospho-alpha-D-ribose 1-diphosphate: step 6/9. The polypeptide is Imidazoleglycerol-phosphate dehydratase (Geobacillus thermodenitrificans (strain NG80-2)).